Here is a 251-residue protein sequence, read N- to C-terminus: Blue-light absorbing proteorhodopsin (251 aa).

A signal peptide spans 1-18 (MGKLLLILGSAIALPSFA). The next 7 helical transmembrane spans lie at 30-50 (VGVS…FFFV), 65-85 (VSGL…GVWI), 97-117 (IDWL…LAAC), 120-140 (VAAS…GAGF), 144-164 (AGLA…LYMI), 190-210 (MMMI…AGYL), and 223-243 (LIYN…IWNV). Lys233 bears the N6-(retinylidene)lysine mark.

It belongs to the archaeal/bacterial/fungal opsin family. In terms of processing, contains one covalently linked retinal chromophore.

Its subcellular location is the cell membrane. Its function is as follows. Light-driven proton pump. May have a regulatory rather than energy harvesting function, based on light-induced opening of proton channels, to modulate cell physiology depending on light intensity variations. Could be, therefore, a sensory rhodopsin, potentially associated with a transducer component. This Gamma-proteobacterium Hot 75m4 protein is Blue-light absorbing proteorhodopsin.